Consider the following 169-residue polypeptide: Putative pre-16S rRNA nuclease (169 aa).

Positions 1-19 are enriched in basic and acidic residues; that stretch reads MTDSDHRLPDRPGEGDPGR. The segment at 1-24 is disordered; sequence MTDSDHRLPDRPGEGDPGRGRRIG.

It belongs to the YqgF nuclease family.

Its subcellular location is the cytoplasm. Could be a nuclease involved in processing of the 5'-end of pre-16S rRNA. The sequence is that of Putative pre-16S rRNA nuclease from Mycobacterium sp. (strain KMS).